We begin with the raw amino-acid sequence, 267 residues long: MRVAALISGGKDSCYNMMQCIAAGHQIVALANLRPAENQVGSDELDSYMYQTVGHHAIDLYAEAMALPLYRRTIRGRSLDTRQVYTKCEGDEVEDLYELLKLVKEKEEVEGISVGAILSDYQRIRVENVCKRLNLQPLAYLWQRNQEDLLREMISSNIQAMIIKVAALGLDPDKHLGKTLDQMEPYLIELSKKYGVHVCGEGGEYETFTLDCPLFKKKIIVDSSEVVIHSADAFAPVAYLRFLELHLEDKVSSVPDNYRTSNYIYNF.

The residue at position 97 (tyrosine 97) is a Phosphotyrosine.

The protein belongs to the Diphthine--ammonia ligase family.

The enzyme catalyses diphthine-[translation elongation factor 2] + NH4(+) + ATP = diphthamide-[translation elongation factor 2] + AMP + diphosphate + H(+). It participates in protein modification; peptidyl-diphthamide biosynthesis. In terms of biological role, amidase that may catalyze the last step of diphthamide biosynthesis using ammonium and ATP. Diphthamide biosynthesis consists in the conversion of an L-histidine residue in the translation elongation factor (EEF2) to diphthamide. This Homo sapiens (Human) protein is Diphthine--ammonia ligase.